The sequence spans 557 residues: Glucose-6-phosphate isomerase (557 aa).

Residue A2 is modified to N-acetylalanine. An N6-acetyllysine modification is found at K12. S107 is modified (phosphoserine). K142 carries the N6-acetyllysine modification. Residue G159 to S160 coordinates D-glucose 6-phosphate. S185 carries the phosphoserine; by CK2 modification. S210–T215 contacts D-glucose 6-phosphate. Residue T250 is modified to Phosphothreonine. D-glucose 6-phosphate is bound by residues Q354, E358, and H389. The active-site Proton donor is the E358. H389 is an active-site residue. The residue at position 455 (S455) is a Phosphoserine. K519 is a binding site for D-glucose 6-phosphate. Residue K519 is part of the active site.

Belongs to the GPI family. As to quaternary structure, homodimer; in the catalytically active form. Monomer in the secreted form. Phosphorylation at Ser-185 by CK2 has been shown to decrease enzymatic activity and may contribute to secretion by a non-classical secretory pathway. Post-translationally, ISGylated.

The protein resides in the cytoplasm. Its subcellular location is the secreted. The catalysed reaction is alpha-D-glucose 6-phosphate = beta-D-fructose 6-phosphate. It participates in carbohydrate degradation; glycolysis; D-glyceraldehyde 3-phosphate and glycerone phosphate from D-glucose: step 2/4. Its function is as follows. In the cytoplasm, catalyzes the conversion of glucose-6-phosphate to fructose-6-phosphate, the second step in glycolysis, and the reverse reaction during gluconeogenesis. Besides it's role as a glycolytic enzyme, also acts as a secreted cytokine: acts as an angiogenic factor (AMF) that stimulates endothelial cell motility. Acts as a neurotrophic factor, neuroleukin, for spinal and sensory neurons. It is secreted by lectin-stimulated T-cells and induces immunoglobulin secretion. The polypeptide is Glucose-6-phosphate isomerase (Bos taurus (Bovine)).